Here is a 745-residue protein sequence, read N- to C-terminus: Phosphoribosylformylglycinamidine synthase subunit PurL (745 aa).

Residue H41 is part of the active site. Residues Y44 and K83 each coordinate ATP. E85 contacts Mg(2+). Substrate contacts are provided by residues 86–89 (SHNH) and R108. H87 acts as the Proton acceptor in catalysis. D109 serves as a coordination point for Mg(2+). Residue Q232 coordinates substrate. D260 contacts Mg(2+). 304–306 (ESQ) serves as a coordination point for substrate. The ATP site is built by D494 and G531. N532 contributes to the Mg(2+) binding site. S534 provides a ligand contact to substrate.

It belongs to the FGAMS family. Monomer. Part of the FGAM synthase complex composed of 1 PurL, 1 PurQ and 2 PurS subunits.

The protein localises to the cytoplasm. It catalyses the reaction N(2)-formyl-N(1)-(5-phospho-beta-D-ribosyl)glycinamide + L-glutamine + ATP + H2O = 2-formamido-N(1)-(5-O-phospho-beta-D-ribosyl)acetamidine + L-glutamate + ADP + phosphate + H(+). It participates in purine metabolism; IMP biosynthesis via de novo pathway; 5-amino-1-(5-phospho-D-ribosyl)imidazole from N(2)-formyl-N(1)-(5-phospho-D-ribosyl)glycinamide: step 1/2. Functionally, part of the phosphoribosylformylglycinamidine synthase complex involved in the purines biosynthetic pathway. Catalyzes the ATP-dependent conversion of formylglycinamide ribonucleotide (FGAR) and glutamine to yield formylglycinamidine ribonucleotide (FGAM) and glutamate. The FGAM synthase complex is composed of three subunits. PurQ produces an ammonia molecule by converting glutamine to glutamate. PurL transfers the ammonia molecule to FGAR to form FGAM in an ATP-dependent manner. PurS interacts with PurQ and PurL and is thought to assist in the transfer of the ammonia molecule from PurQ to PurL. This Aquifex aeolicus (strain VF5) protein is Phosphoribosylformylglycinamidine synthase subunit PurL.